The sequence spans 235 residues: Large ribosomal subunit protein uL1 (235 aa).

It belongs to the universal ribosomal protein uL1 family. As to quaternary structure, part of the 50S ribosomal subunit.

Binds directly to 23S rRNA. The L1 stalk is quite mobile in the ribosome, and is involved in E site tRNA release. Functionally, protein L1 is also a translational repressor protein, it controls the translation of the L11 operon by binding to its mRNA. The polypeptide is Large ribosomal subunit protein uL1 (Mycolicibacterium paratuberculosis (strain ATCC BAA-968 / K-10) (Mycobacterium paratuberculosis)).